A 1314-amino-acid polypeptide reads, in one-letter code: Enfumafungin synthase efuA (1314 aa).

The segment at 1 to 680 is terpenne cyclase; that stretch reads MPSYHNTDKT…RYIDKASRQG (680 aa). 2 PFTB repeats span residues 19-62 and 66-107; these read LQQA…ELSL and GPEI…RILG. 3 helical membrane-spanning segments follow: residues 133–153, 155–175, and 230–250; these read FFTR…IPQM, AELI…SSWA, and YQWI…FGGL. A PFTB 3 repeat occupies 260–300; it reads LKRCTAWLLEHQEESGDWAGFFPPIHGSIWALLLDGFSFQS. D395 functions as the Proton donor in the catalytic mechanism. 2 PFTB repeats span residues 417 to 458 and 546 to 597; these read VMNG…DSLV and CMRT…LRFR. The interval 681–1314 is glycosyltransferase; that stretch reads IETLRIPSSS…ADSVLDIEEK (634 aa). A helical transmembrane segment spans residues 1200-1220; sequence AIVQLLYGFTTTILALFGWLK. The segment at 1289 to 1314 is disordered; sequence DSGASESSRSSLDGGHADSVLDIEEK. A compositionally biased stretch (low complexity) spans 1292–1302; the sequence is ASESSRSSLDG.

In the N-terminal section; belongs to the terpene cyclase/mutase family. This sequence in the C-terminal section; belongs to the glycosyltransferase 28 family.

Its subcellular location is the membrane. It functions in the pathway secondary metabolite biosynthesis; terpenoid biosynthesis. In terms of biological role, terpene cyclase-glycosyl transferase fusion protein; part of the gene cluster that mediates the biosynthesis of enfumafungin, a glycosylated fernene-type triterpenoid with potent antifungal activity, mediated by its interaction with beta-1,3-glucan synthase and the fungal cell wall. The pathway begins with the terpene cyclase-glycosyl transferase fusion protein that most likely uses 2,3-oxidosqualene as substrate and catalyzes glycosylation immediately after cyclization. The fernene glycoside then could be processed by the desaturase efuI which catalyzes isomerization of a double bond established by efuA to form the core structure. The latter would then undergo a series of hydroxylations in unknown order at C-2, C-19, C-23 and C-25, which would be catalyzed by two of the three cytochrome P450 monooxygenases efuB, efuG or efuH. The hydroxy-group at C-25 becomes oxidized by the dehydrogenase efuE to enable a spontaneous, non-enzymatic hemiacetal formation with C-23. After hydroxylation at C-2, acetylation by the acetyltransferase efuC takes place. The final steps in enfumafungin biosynthesis require expansion of the 5-membered ring by lactonization via a Baeyer-Villiger reaction mediated by one of the BGC's cytochrome P450 monooxygenases (efuB, efuG or efuH) followed by ring cleavage. This type of reaction would establish a double bond between C-20 and C-21 which could be reduced by the reductase efuL to form the final product. The chain is Enfumafungin synthase efuA from Hormonema carpetanum.